We begin with the raw amino-acid sequence, 309 residues long: 4-diphosphocytidyl-2-C-methyl-D-erythritol kinase (309 aa).

The active site involves Lys-28. 120–130 (PSQAGMGGGSS) provides a ligand contact to ATP. The active site involves Asp-162.

This sequence belongs to the GHMP kinase family. IspE subfamily.

The enzyme catalyses 4-CDP-2-C-methyl-D-erythritol + ATP = 4-CDP-2-C-methyl-D-erythritol 2-phosphate + ADP + H(+). It participates in isoprenoid biosynthesis; isopentenyl diphosphate biosynthesis via DXP pathway; isopentenyl diphosphate from 1-deoxy-D-xylulose 5-phosphate: step 3/6. Its function is as follows. Catalyzes the phosphorylation of the position 2 hydroxy group of 4-diphosphocytidyl-2C-methyl-D-erythritol. The polypeptide is 4-diphosphocytidyl-2-C-methyl-D-erythritol kinase (Polaromonas sp. (strain JS666 / ATCC BAA-500)).